The sequence spans 106 residues: Large ribosomal subunit protein uL23 (106 aa).

The protein belongs to the universal ribosomal protein uL23 family. In terms of assembly, part of the 50S ribosomal subunit. Contacts protein L29, and trigger factor when it is bound to the ribosome.

In terms of biological role, one of the early assembly proteins it binds 23S rRNA. One of the proteins that surrounds the polypeptide exit tunnel on the outside of the ribosome. Forms the main docking site for trigger factor binding to the ribosome. The protein is Large ribosomal subunit protein uL23 of Acinetobacter baylyi (strain ATCC 33305 / BD413 / ADP1).